A 398-amino-acid polypeptide reads, in one-letter code: MASTSSTSTDGHLNIRPMVHGSDKKLNFGAYITGLDLNNASDAEVDQLREAILRHKIVVIKGQQAEKPDKNWEMIKKLDPMHHMITQEEFGQLFHPTGEGLIAMLKLATVPTTEHGHIHLMGKGYQGDDHYGLKKLNLGEAFAGNYYSKPLAEEDFRAGVTRFQSWHMDGPLYKVHPPYISSLRFIQLPDGEQTVEWADGSGLSLKTKPGRTAFFSTSQLYDMLTDEERAMVDNSAVEYMYYPYEWIRGCRGNPNGLNVADEGREKPLDAMEEIARDERWTKTYPMVWFNELTKEKSLQVQPNCVRRLLIRRSADQKEPEIIEGPERVREFMNKLQQRIVRPEYVYVGPEEEGDHVFWYNWGMMHSKIDYPIAYGPRIVHQGWIPSHRVPRGPTAVAH.

Residues histidine 167 and aspartate 169 each contribute to the Fe cation site. A 2-oxoglutarate-binding site is contributed by threonine 212. Histidine 365 is a binding site for Fe cation. Residue arginine 377 participates in 2-oxoglutarate binding.

Belongs to the TfdA dioxygenase family. Fe(2+) serves as cofactor.

Its pathway is mycotoxin biosynthesis. In terms of biological role, alpha-ketoglutarate dependent dioxygenase; part of the gene cluster that mediates the biosynthesis of the diterpene glucoside brassicicene C. In the first step of the brassicicene C biosynthesis, the bifunctional diterpene synthase bsc8 that possesses both prenyl transferase and terpene cyclase activity, converts isopentenyl diphosphate and dimethylallyl diphosphate into geranylgeranyl diphosphate (GGDP) that is further converted into fusicocca-2,10(14)-diene, the first precursor for brassicicene C. Fusicocca-2,10(14)-diene is then substrate of cytochrome P450 monooxygenase bsc1 for hydroxylation at the C-8 position. Oxidation at C-16 position to aldehyde is then catalyzed by the cytochrome P450 monooyxygenase bsc7, yielding fusicocca-2,10(14)-diene-8-beta,16-diol. Follows the isomerization of the double bond and reduction of aldehyde to alcohol catalyzed by the short-chain dehydrogenase/reductase bsc3 to yield the diol compound fusicocca-1,10(14)-diene-8 beta,16-diol. The next step is the oxidation at the C-3 position of fusicocca-2,10(14)-diene-8-beta,16-diol catalyzed by the alpha-ketoglutarate dependent dioxygenase bsc9, to produce a triol compound. Methylation of the hydroxy group at position 16 is performed by the methyltransferase bsc6. 16-O-methylation is followed by oxidation at the C-13 position to ketone and an alkyl shift of the methyl group leads to brassicicene C. Although the probable acetyltransferase bsc4 is included in the gene cluster, no acetylation reactions are necessary for brassicicene C biosynthesis. However, the fact that brassicicene E, which is a structurally related compound having an acetoxy group at position 12, was previously isolated from another strain of A.brassicicola suggests that the ATCC 96836 strain might also produce a small amount of brassicicene E. This Alternaria brassicicola (Dark leaf spot agent) protein is Alpha-ketoglutarate-dependent dioxygenase bsc9.